The chain runs to 189 residues: Ion-translocating oxidoreductase complex subunit B (189 aa).

The segment at 1–26 (MSQVIIAIILLGLLALAFGALLGYAA) is hydrophobic. Residues 32 to 90 (EGDPIIDQAEALLPQTQCGQCGYPGCRPYAEAIANGEKINKCPPGGTATMEKLAELMGV) enclose the 4Fe-4S domain. Positions 49, 52, 57, 73, 114, 117, 120, 124, 144, 147, 150, and 154 each coordinate [4Fe-4S] cluster. 2 4Fe-4S ferredoxin-type domains span residues 105-134 (KVAFIREAECIGCTKCIQACPVDAILGTGK) and 135-164 (QMHTVITDYCTGCDLCVEPCPVDCIDMIPV).

The protein belongs to the 4Fe4S bacterial-type ferredoxin family. RnfB subfamily. As to quaternary structure, the complex is composed of six subunits: RnfA, RnfB, RnfC, RnfD, RnfE and RnfG. It depends on [4Fe-4S] cluster as a cofactor.

It localises to the cell inner membrane. In terms of biological role, part of a membrane-bound complex that couples electron transfer with translocation of ions across the membrane. This is Ion-translocating oxidoreductase complex subunit B from Shewanella loihica (strain ATCC BAA-1088 / PV-4).